Here is an 83-residue protein sequence, read N- to C-terminus: MDKLISLKDVMRFIFKFGLPGLCIAVGLIVMVANKWLGIPWPCYVIVGSVSLSFGLILFIVQTIKEIIIYRKEKKDENIYSKK.

It belongs to the microviridae C protein family.

Plays a central role in the packaging of viral DNA into phage procapsid, which occurs in the late stage of infection. Can interact with the replicative complex after the completion of one round of DNA synthesis. When protein ORF5 is bound to the replicative form, the complex becomes accessible to procapsid and serves as a DNA packaging apparatus. This Spiroplasma melliferum (SpV4) protein is Protein ORF5.